The sequence spans 606 residues: NADH-ubiquinone oxidoreductase chain 5 (606 aa).

A run of 15 helical transmembrane segments spans residues 3–23 (VINLIPTLMLTSLIILTLPII), 38–58 (ITKTAVTYAFAISLIPTLLFI), 87–107 (FFSLTFMPIALFITWSIMEFS), 124–144 (LLLFLITMLILVSANNLLQLF), 180–200 (IGDMGFIMMMAWFTIHLNSWE), 216–236 (LLGLLLASAGKSAQFGLHPWL), 244–264 (TPVSALLHSSTMVMAGVFTLI), 276–296 (IQTSTLCLGAITTLFTAICAL), 304–323 (IIALSTSSQLGLMMVTIGIN), 328–350 (AFIHMCTHAFFKAMLFLSSGSII), 369–389 (MPITSTAIIIGSLALTGMPFL), 404–424 (MSYINTWALLITLIAVSMTAS), 460–480 (LILGSIFMGFLISMNTIPHTT), 483–503 (MTMPPHLKFMALAVTLLGFTV), and 586–606 (LMKLYFLSFLLSITLGLLIAL).

Belongs to the complex I subunit 5 family. Core subunit of respiratory chain NADH dehydrogenase (Complex I) which is composed of 45 different subunits.

The protein localises to the mitochondrion inner membrane. The enzyme catalyses a ubiquinone + NADH + 5 H(+)(in) = a ubiquinol + NAD(+) + 4 H(+)(out). In terms of biological role, core subunit of the mitochondrial membrane respiratory chain NADH dehydrogenase (Complex I) which catalyzes electron transfer from NADH through the respiratory chain, using ubiquinone as an electron acceptor. Essential for the catalytic activity and assembly of complex I. The protein is NADH-ubiquinone oxidoreductase chain 5 (MT-ND5) of Loxodonta africana (African elephant).